Here is a 448-residue protein sequence, read N- to C-terminus: MKLILVLLCLISTLFVVKGGLSPTEQQIIVSYHNKWRSSPIGPTPSTTIPALKWNATIAAALQSSLDKCDGKFSTMSQYGTNSEWQSWWTPNTYFNLNATLDNIQKGASFYDWNAKGCNSSANYNCQLWTYAVWSKSTSYGCAKTICPDKSEVSCSYYPAGGFKGVLPYTPKTTTPAPTTPAPTTPKPTTPAPTTPKPTTPAPTTPKPTTPAPTTPKPTTPAPTTPKPTTPAPTTPAPTSTLTVDWTSYQTPIRDQGQCGSCWAFASSAALESRYLIKYGTAQKSTLQLSNQNAVNCIASGCNGGWSGNYFNFFKTPGIAYEKDDPYKAVTGTSCITTSSVARFKYTNYGYTEKTKAALLAELKKGPVTIAVYVDSAFQNYKSGIYNSATKYTGINHLVLLVGYDQATDAYKIKNSWGSWWGESGYMRITASNDNLAIFAYNSYYPTF.

The signal sequence occupies residues 1-19 (MKLILVLLCLISTLFVVKG). Positions 30–157 (VSYHNKWRSS…PDKSEVSCSY (128 aa)) constitute an SCP domain. N-linked (GlcNAc...) asparagine glycans are attached at residues asparagine 55, asparagine 98, and asparagine 119. A disordered region spans residues 171–242 (PKTTTPAPTT…PTTPAPTSTL (72 aa)). Residues 178 to 236 (PTTPAPTTPKPTTPAPTTPKPTTPAPTTPKPTTPAPTTPKPTTPAPTTPKPTTPAPTTP) are compositionally biased toward pro residues. Residues cysteine 262, histidine 397, and asparagine 415 contribute to the active site.

The protein belongs to the peptidase C1 family.

It localises to the secreted. In terms of biological role, thiol protease that seems to be involved in the sexual development. This is Gamete and mating-type specific protein A (gmsA) from Dictyostelium discoideum (Social amoeba).